The primary structure comprises 181 residues: Large ribosomal subunit protein uL6 (181 aa).

This sequence belongs to the universal ribosomal protein uL6 family. In terms of assembly, part of the 50S ribosomal subunit.

Its function is as follows. This protein binds to the 23S rRNA, and is important in its secondary structure. It is located near the subunit interface in the base of the L7/L12 stalk, and near the tRNA binding site of the peptidyltransferase center. In Synechococcus sp. (strain JA-3-3Ab) (Cyanobacteria bacterium Yellowstone A-Prime), this protein is Large ribosomal subunit protein uL6.